The primary structure comprises 62 residues: Large ribosomal subunit protein uL29 (62 aa).

Belongs to the universal ribosomal protein uL29 family.

The chain is Large ribosomal subunit protein uL29 from Chromobacterium violaceum (strain ATCC 12472 / DSM 30191 / JCM 1249 / CCUG 213 / NBRC 12614 / NCIMB 9131 / NCTC 9757 / MK).